The following is a 526-amino-acid chain: Adenylosuccinate synthetase (526 aa).

GTP is bound by residues 102 to 108 and 130 to 132; these read GDEGKGK and GHT. The Proton acceptor role is filled by Asp103. Residues Asp103 and Gly130 each contribute to the Mg(2+) site. IMP-binding positions include 103–106, 128–131, Thr219, Arg233, Asn310, Thr325, and Arg392; these read DEGK and NAGH. The Proton donor role is filled by His131. 388–394 contacts substrate; the sequence is TTTGRTR. GTP-binding positions include Arg394, 420–422, and 502–504; these read KVD and GVG.

Belongs to the adenylosuccinate synthetase family. As to quaternary structure, homodimer. Mg(2+) is required as a cofactor.

It localises to the cytoplasm. It catalyses the reaction IMP + L-aspartate + GTP = N(6)-(1,2-dicarboxyethyl)-AMP + GDP + phosphate + 2 H(+). Its pathway is purine metabolism; AMP biosynthesis via de novo pathway; AMP from IMP: step 1/2. Functionally, plays an important role in the de novo pathway and in the salvage pathway of purine nucleotide biosynthesis. Catalyzes the first committed step in the biosynthesis of AMP from IMP. This is Adenylosuccinate synthetase from Phaeodactylum tricornutum (strain CCAP 1055/1).